A 309-amino-acid polypeptide reads, in one-letter code: WD repeat domain phosphoinositide-interacting protein 4 (309 aa).

The WD 1 repeat unit spans residues 4 to 42 (QPLRGVTSLHFNQDQSCFCCAMETGVRIYNVEPLMEKGH). Positions 180 to 183 (LRRG) match the L/FRRG motif motif. Residues 184–223 (TDPATLYCINFSHDSSFLCASSDKGTVHIFALKDTRLNRR) form a WD 2 repeat.

It belongs to the WD repeat PROPPIN family. As to quaternary structure, interacts with WIPI1. Interacts with WIPI2. Interacts with ATG2A and ATG2B. Interacts with ULK1. May interact with the PRKAA1, PRKAA2, PRKAB1 and PRKAG1 subunits of the AMPK kinase. May interact with NUDC.

It is found in the preautophagosomal structure. It localises to the cytoplasm. Its function is as follows. Component of the autophagy machinery that controls the major intracellular degradation process by which cytoplasmic materials are packaged into autophagosomes and delivered to lysosomes for degradation. Binds phosphatidylinositol 3-phosphate (PtdIns3P). Activated by the STK11/AMPK signaling pathway upon starvation, WDR45 is involved in autophagosome assembly downstream of WIPI2, regulating the size of forming autophagosomes. Together with WIPI1, promotes ATG2 (ATG2A or ATG2B)-mediated lipid transfer by enhancing ATG2-association with phosphatidylinositol 3-monophosphate (PI3P)-containing membranes. Probably recruited to membranes through its PtdIns3P activity. This chain is WD repeat domain phosphoinositide-interacting protein 4 (Wdr45), found in Rattus norvegicus (Rat).